The chain runs to 315 residues: Ribosomal protein L11 methyltransferase (315 aa).

S-adenosyl-L-methionine-binding residues include Thr162, Gly183, Asp205, and Asn248.

It belongs to the methyltransferase superfamily. PrmA family.

Its subcellular location is the cytoplasm. It catalyses the reaction L-lysyl-[protein] + 3 S-adenosyl-L-methionine = N(6),N(6),N(6)-trimethyl-L-lysyl-[protein] + 3 S-adenosyl-L-homocysteine + 3 H(+). Its function is as follows. Methylates ribosomal protein L11. This chain is Ribosomal protein L11 methyltransferase, found in Oceanobacillus iheyensis (strain DSM 14371 / CIP 107618 / JCM 11309 / KCTC 3954 / HTE831).